The primary structure comprises 343 residues: Phenylalanine--tRNA ligase alpha subunit (343 aa).

Glu264 provides a ligand contact to Mg(2+).

It belongs to the class-II aminoacyl-tRNA synthetase family. Phe-tRNA synthetase alpha subunit type 1 subfamily. In terms of assembly, tetramer of two alpha and two beta subunits. Mg(2+) serves as cofactor.

It is found in the cytoplasm. It carries out the reaction tRNA(Phe) + L-phenylalanine + ATP = L-phenylalanyl-tRNA(Phe) + AMP + diphosphate + H(+). This is Phenylalanine--tRNA ligase alpha subunit from Azoarcus sp. (strain BH72).